Here is a 659-residue protein sequence, read N- to C-terminus: MQGSSLWLSLTFRSARVLSRARFFEWQSPGLPNTAAMENGTGPYGEERPREVQETTVTEGAAKIAFPSANEVFYNPVQEFNRDLTCAVITEFARIQLGAKGIQIKVPGEKDTQKVVVDLSEQEEEKVELKESENLASGDQPRTAAVGEICEEGLHVLEGLAASGLRSIRFALEVPGLRSVVANDASTRAVDLIRRNVQLNDVAHLVQPSQADARMLMYQHQRVSERFDVIDLDPYGSPATFLDAAVQAVSEGGLLCVTCTDMAVLAGNSGETCYSKYGAMALKSRACHEMALRIVLHSLDLRANCYQRFVVPLLSISADFYVRVFVRVFTGQAKVKASASKQALVFQCVGCGAFHLQRLGKASGVPSGRAKFSAACGPPVTPECEHCGQRHQLGGPMWAEPIHDLDFVGRVLEAVSANPGRFHTSERIRGVLSVITEELPDVPLYYTLDQLSSTIHCNTPSLLQLRSALLHADFRVSLSHACKNAVKTDAPASALWDIMRCWEKECPVKRERLSETSPAFRILSVEPRLQANFTIREDANPSSRQRGLKRFQANPEANWGPRPRARPGGKAADEAMEERRRLLQNKRKEPPEDVAQRAARLKTFPCKRFKEGTCQRGDQCCYSHSPPTPRVSADAAPDCPETSNQTPPGPGAAAGPGID.

Residues 1–23 constitute a mitochondrion transit peptide; it reads MQGSSLWLSLTFRSARVLSRARF. A Trm1 methyltransferase domain is found at 55 to 499; sequence TTVTEGAAKI…APASALWDIM (445 aa). Arginine 82 contacts S-adenosyl-L-methionine. Position 120 is a phosphoserine (serine 120). 2 residues coordinate S-adenosyl-L-methionine: arginine 166 and aspartate 184. Residues cysteine 348, cysteine 351, cysteine 384, and cysteine 387 each contribute to the Zn(2+) site. Serine 517 carries the phosphoserine modification. Disordered stretches follow at residues 537–578 and 616–659; these read EDAN…AMEE and RGDQ…PGID. The short motif at 543-575 is the Nuclear localization signal element; it reads SRQRGLKRFQANPEANWGPRPRARPGGKAADEA. The C3H1-type zinc finger occupies 600–627; that stretch reads RLKTFPCKRFKEGTCQRGDQCCYSHSPP. The residue at position 625 (serine 625) is a Phosphoserine. A phosphothreonine mark is found at threonine 628 and threonine 646.

This sequence belongs to the class I-like SAM-binding methyltransferase superfamily. Trm1 family. (Microbial infection) Cleaved between Gln-530 and Ala-531 by the 3C-like proteinase nsp5 from human coronavirus SARS-CoV-2, leading to its inactivation.

The protein resides in the mitochondrion. It is found in the nucleus. It localises to the cytoplasm. It catalyses the reaction guanosine(26) in tRNA + 2 S-adenosyl-L-methionine = N(2)-dimethylguanosine(26) in tRNA + 2 S-adenosyl-L-homocysteine + 2 H(+). In terms of biological role, dimethylates a single guanine residue at position 26 of most nuclear- and mitochondrial-encoded tRNAs using S-adenosyl-L-methionine as donor of the methyl groups. tRNA guanine(26)-dimethylation is required for redox homeostasis and ensure proper cellular proliferation and oxidative stress survival. The protein is tRNA (guanine(26)-N(2))-dimethyltransferase of Homo sapiens (Human).